The sequence spans 129 residues: Lysozyme C (129 aa).

A C-type lysozyme domain is found at 1-129 (KIYTRCELAA…VSKWIKDCKL (129 aa)). Cystine bridges form between Cys6/Cys127, Cys30/Cys115, Cys64/Cys80, and Cys76/Cys94. Active-site residues include Glu35 and Asp52.

It belongs to the glycosyl hydrolase 22 family. As to quaternary structure, monomer.

The protein resides in the secreted. The catalysed reaction is Hydrolysis of (1-&gt;4)-beta-linkages between N-acetylmuramic acid and N-acetyl-D-glucosamine residues in a peptidoglycan and between N-acetyl-D-glucosamine residues in chitodextrins.. Functionally, lysozymes have primarily a bacteriolytic function; those in tissues and body fluids are associated with the monocyte-macrophage system and enhance the activity of immunoagents. The polypeptide is Lysozyme C (LYZ) (Crax fasciolata (Bare-faced curassow)).